Consider the following 87-residue polypeptide: Kappa 1b-bungarotoxin (87 aa).

The signal sequence occupies residues 1 to 21; that stretch reads MKTLLLTLVVVTIVCLDLGYT. 5 disulfide bridges follow: C24–C42, C35–C63, C48–C52, C67–C79, and C80–C85.

This sequence belongs to the three-finger toxin family. Long-chain subfamily. Kappa-neurotoxin sub-subfamily. In terms of assembly, homo- and heterodimer; non-covalently linked. In terms of tissue distribution, expressed by the venom gland.

The protein localises to the secreted. In terms of biological role, postsynaptic neurotoxin that binds and inhibits neuronal nicotinic acetylcholine receptors (nAChR) with high affinity (IC(50)&lt;100 nM). Is a selective, and slowly reversible antagonist of alpha-3/CHRNA3-containing and some alpha-4/CHRNA4-containing AChRs. The chain is Kappa 1b-bungarotoxin from Bungarus candidus (Malayan krait).